A 472-amino-acid chain; its full sequence is Coronin-6 (472 aa).

WD repeat units follow at residues 23-64 (QAYE…VLPL), 72-111 (KNYP…VWQI), 122-161 (EPII…IWNV), 165-204 (EVLL…IIDP), 210-251 (VAEQ…LWDP), and 256-296 (EPVA…YFEI). Residues 407 to 433 (KRNILDVRPPSGPRRSQSASDAPLSQQ) are disordered. The span at 420-433 (RRSQSASDAPLSQQ) shows a compositional bias: polar residues. A coiled-coil region spans residues 430–464 (LSQQHTLETLLEEIKALRERVQAQEQRITALENML).

The chain is Coronin-6 (CORO6) from Homo sapiens (Human).